Consider the following 149-residue polypeptide: Transcriptional repressor NrdR (149 aa).

Residues C3 to C34 fold into a zinc finger. The region spanning P49–E139 is the ATP-cone domain.

It belongs to the NrdR family. It depends on Zn(2+) as a cofactor.

Functionally, negatively regulates transcription of bacterial ribonucleotide reductase nrd genes and operons by binding to NrdR-boxes. The sequence is that of Transcriptional repressor NrdR from Shigella flexneri.